The primary structure comprises 528 residues: Low affinity inorganic phosphate transporter 4 (528 aa).

Over 1 to 18 the chain is Cytoplasmic; that stretch reads MGLEVLEALDSARTQWYH. Residues 19–39 traverse the membrane as a helical segment; the sequence is VTAIVIAGMGFFTDAYDLFCI. Topologically, residues 40 to 68 are extracellular; it reads STVSKLLGRLYYFDPSTNKPGKLPPSVNN. A helical membrane pass occupies residues 69–89; that stretch reads VVTGVALVGTLSGQLVFGWLG. The Cytoplasmic portion of the chain corresponds to 90 to 96; it reads DKLGRKK. A helical transmembrane segment spans residues 97-117; sequence VYGVTLIIMVACAICSGLSFG. Residues 118 to 122 are Extracellular-facing; it reads SSAKS. Residues 123–143 traverse the membrane as a helical segment; sequence VMITLCFFRFWLGFGIGGDYP. Residues 144 to 158 lie on the Cytoplasmic side of the membrane; the sequence is LSATIMSEYANKRTR. A helical transmembrane segment spans residues 159 to 179; sequence GAFIAAVFAMQGVGIIFAGLV. Over 180–208 the chain is Extracellular; it reads SMVFSGIFKAYYQAPRFNEDPILSTQPEG. A helical membrane pass occupies residues 209-229; it reads DLLWRLILMIGAVPAAMTYYW. Residues 230-292 are Cytoplasmic-facing; that stretch reads RMKMPETGRY…SEFFNRHGRH (63 aa). Residues 293 to 313 traverse the membrane as a helical segment; the sequence is LIGTMSCWFLLDIAFYSQNLT. At 314 to 341 the chain is on the extracellular side; that stretch reads QKDIYPAMGLIRQDKEMNAIDEVFQTSR. The helical transmembrane segment at 342–362 threads the bilayer; it reads AMFVVALFGTFPGYWFTVFFI. Over 363–371 the chain is Cytoplasmic; the sequence is EKLGRFKIQ. A helical transmembrane segment spans residues 372 to 392; it reads LVGFFMMSFFMFVIGVKYEYL. Residues 393–401 lie on the Extracellular side of the membrane; the sequence is KDENKNLFA. The chain crosses the membrane as a helical span at residues 402–422; sequence LLYGLTFFFANFGPNSTTFVL. The Cytoplasmic segment spans residues 423-433; sequence PAELFPTRVRS. Residues 434–454 traverse the membrane as a helical segment; sequence TCHAFSAASGKAGAMVGAFGI. At 455–468 the chain is on the extracellular side; it reads QYYTLDGTPRKIRR. Residues 469 to 489 form a helical membrane-spanning segment; that stretch reads AMMILAFTNLIGFFCTFLVTE. The Cytoplasmic portion of the chain corresponds to 490-528; sequence TKGRSLEEISGEDGRESELTATPNDRAPGIRQDSRTEKM. Over residues 497–507 the composition is skewed to basic and acidic residues; it reads EISGEDGRESE. Residues 497–528 form a disordered region; it reads EISGEDGRESELTATPNDRAPGIRQDSRTEKM.

This sequence belongs to the major facilitator superfamily. Phosphate:H(+) symporter (TC 2.A.1.9) family. Mostly expressed in mycorrhizal roots. Also observed in root tips of non-mycorrhizal roots, in a phosphate (Pi) depended-manner, highest expression levels being observed in low Pi conditions.

The protein localises to the cell membrane. It catalyses the reaction phosphate(in) + H(+)(in) = phosphate(out) + H(+)(out). In terms of biological role, low-affinity transporter for external inorganic phosphate (Pi) probably involved in the acquisition of phosphate released by arbuscular mycorrhizal (AM) fungi (e.g. Gigaspora gigantea, Glomus versiforme and G.intraradices) during AM symbiosis; required for propper mycorrhizal arbuscule morphology. Acts as a Pi-sensing machinery at the root tip level, independently of AM fungi, involved in the regulation of early root branching and lateral roots formation. This is Low affinity inorganic phosphate transporter 4 from Medicago truncatula (Barrel medic).